A 539-amino-acid chain; its full sequence is MLEVSTLRSPKADQRAGVGGHHVVGFVPAPPSPADVADEVDAFIVDDSCLLEYIDFSCCDVPFFHADDGDILPDLEVDPTELLAEFASSPDDEPPPTTSAPGPGEPAAAAGAKEDVKEDGAAAAAAAAAADYDGSPPPPRGKKKKDDEERSSSLPEEKDAKNGGGDEVLSAVTTEDSSAGAAKSCSPSAEGHSKRKPSSSSSSAAAGKNSHGKRKVKVDWTPELHRRFVQAVEQLGIDKAVPSRILELMGIECLTRHNIASHLQKYRSHRKHLMAREAEAASWTQKRQMYTAAAAAAAVAAGGGPRKDAAAATAAVAPWVMPTIGFPPPHAAAMVPPPPHPPPFCRPPLHVWGHPTAGVEPTTAAAPPPPSPHAQPPLLPVWPRHLAPPPPPLPAAWAHGHQPAPVDPAAYWQQQYNAARKWGPQAVTPGTPCMPPPLPPAAMLQRFPVPPVPGMVPHPMYRPIPPPSPPQGNKLAALQLQLDAHPSKESIDAAIGDVLVKPWLPLPLGLKPPSLDSVMSELHKQGIPKVPPAASGAAG.

The interval 86-218 (FASSPDDEPP…NSHGKRKVKV (133 aa)) is disordered. Low complexity-rich tracts occupy residues 99–111 (SAPG…AAAG) and 121–130 (AAAAAAAAAA). The span at 144-161 (KKDDEERSSSLPEEKDAK) shows a compositional bias: basic and acidic residues. An HTH myb-type domain is found at 212–271 (GKRKVKVDWTPELHRRFVQAVEQLGIDKAVPSRILELMGIECLTRHNIASHLQKYRSHRK). Positions 242 to 267 (PSRILELMGIECLTRHNIASHLQKYR) form a DNA-binding region, H-T-H motif.

Expressed in leaves.

It is found in the nucleus. Its function is as follows. Probable transcriptional activator that promotes chloroplast development. Acts as an activator of nuclear photosynthetic genes involved in chlorophyll biosynthesis, light harvesting, and electron transport. This is Probable transcription factor GLK2 (GLK2) from Oryza sativa subsp. japonica (Rice).